The sequence spans 340 residues: Ephrin-B3 (340 aa).

A signal peptide spans 1-27 (MGPPHSGPGGVRVGALLLLGVLGLVSG). Residues 28–167 (LSLEPVYWNS…TRGMKVLLRV (140 aa)) form the Ephrin RBD domain. Topologically, residues 28 to 226 (LSLEPVYWNS…EGPLPPPSMP (199 aa)) are extracellular. Cystine bridges form between Cys-62–Cys-104 and Cys-92–Cys-156. A disordered region spans residues 168-225 (GQSPRGGAVPRKPVSEMPMERDRGAAHSLEPGKENLPGDPTSNATSRGAEGPLPPPSM). Positions 185–200 (PMERDRGAAHSLEPGK) are enriched in basic and acidic residues. Asn-210 carries N-linked (GlcNAc...) asparagine glycosylation. The chain crosses the membrane as a helical span at residues 227–247 (AVAGAAGGLALLLLGVAGAGG). Residues 248 to 340 (AMCWRRRRAK…QSPPNIYYKV (93 aa)) are Cytoplasmic-facing. Positions 254–298 (RRAKPSESRHPGPGSFGRGGSLGLGGGGGMGPREAEPGELGIALR) are disordered. The segment covering 267 to 284 (GSFGRGGSLGLGGGGGMG) has biased composition (gly residues). Arg-271 is subject to Omega-N-methylarginine. Ser-274 is modified (phosphoserine). The PDZ-binding motif lies at 338–340 (YKV).

This sequence belongs to the ephrin family. As to quaternary structure, interacts with GRIP1 and GRIP2. (Microbial infection) Interacts with nipah virus and hendra virus glycoprotein. As to expression, highly expressed in brain; expressed in embryonic floor plate, roof plate and hindbrain segments.

The protein resides in the membrane. Cell surface transmembrane ligand for Eph receptors, a family of receptor tyrosine kinases which are crucial for migration, repulsion and adhesion during neuronal, vascular and epithelial development. Binds promiscuously Eph receptors residing on adjacent cells, leading to contact-dependent bidirectional signaling into neighboring cells. The signaling pathway downstream of the receptor is referred to as forward signaling while the signaling pathway downstream of the ephrin ligand is referred to as reverse signaling. May play a pivotal role in forebrain function. Binds to, and induce the collapse of, commissural axons/growth cones in vitro. May play a role in constraining the orientation of longitudinally projecting axons. Its function is as follows. (Microbial infection) Acts as a receptor for nipah virus and hendra virus. The polypeptide is Ephrin-B3 (EFNB3) (Homo sapiens (Human)).